The chain runs to 1032 residues: Error-prone DNA polymerase (1032 aa).

It belongs to the DNA polymerase type-C family. DnaE2 subfamily.

It is found in the cytoplasm. It carries out the reaction DNA(n) + a 2'-deoxyribonucleoside 5'-triphosphate = DNA(n+1) + diphosphate. DNA polymerase involved in damage-induced mutagenesis and translesion synthesis (TLS). It is not the major replicative DNA polymerase. This Hahella chejuensis (strain KCTC 2396) protein is Error-prone DNA polymerase.